Consider the following 30-residue polypeptide: GIPCGESCVFIPCITSVAGCSCKSKVCYRN.

The segment at residues glycine 1–asparagine 30 is a cross-link (cyclopeptide (Gly-Asn)). 3 cysteine pairs are disulfide-bonded: cysteine 4/cysteine 20, cysteine 8/cysteine 22, and cysteine 13/cysteine 27.

This is a cyclic peptide.

Its function is as follows. Probably participates in a plant defense mechanism. Inhibits the cytopathic effects of the human immunodeficiency virus. In Chassalia parviflora, this protein is Circulin-C.